We begin with the raw amino-acid sequence, 247 residues long: DNA-directed RNA polymerase subunit Rpo3 (247 aa).

It belongs to the archaeal Rpo3/eukaryotic RPB3 RNA polymerase subunit family. Part of the RNA polymerase complex.

Its subcellular location is the cytoplasm. It catalyses the reaction RNA(n) + a ribonucleoside 5'-triphosphate = RNA(n+1) + diphosphate. Its function is as follows. DNA-dependent RNA polymerase (RNAP) catalyzes the transcription of DNA into RNA using the four ribonucleoside triphosphates as substrates. This chain is DNA-directed RNA polymerase subunit Rpo3, found in Natronomonas pharaonis (strain ATCC 35678 / DSM 2160 / CIP 103997 / JCM 8858 / NBRC 14720 / NCIMB 2260 / Gabara) (Halobacterium pharaonis).